A 188-amino-acid chain; its full sequence is CASP-like protein 4B3 (188 aa).

The disordered stretch occupies residues 1–21 (MSFSPASSEPHDAPAAAGSSV). Residues 1–42 (MSFSPASSEPHDAPAAAGSSVPASRSIAERWKMEAAPIRARL) are Cytoplasmic-facing. The chain crosses the membrane as a helical span at residues 43–63 (LLRAFAWLFSLLALVVMATDV). The Extracellular segment spans residues 64-76 (HGRGGAQDFSTYP). Residues 77-97 (EYNYCLGMSIIALLYATAQLV) form a helical membrane-spanning segment. Residues 98–114 (RDAHRLSSGRDLVAGRK) are Cytoplasmic-facing. The helical transmembrane segment at 115–135 (AAAVVDFAGDQVVAYSLISGL) threads the bilayer. Residues 136 to 156 (SAAAPVTDYMRQATDNLFNDS) lie on the Extracellular side of the membrane. Asn154 is a glycosylation site (N-linked (GlcNAc...) asparagine). A helical membrane pass occupies residues 157–177 (AAAAISLAFFAFLAISLSALI). Residues 178–188 (SGYNLSLEAIV) are Cytoplasmic-facing.

It belongs to the Casparian strip membrane proteins (CASP) family. Homodimer and heterodimers.

The protein resides in the cell membrane. In Hordeum vulgare subsp. vulgare (Domesticated barley), this protein is CASP-like protein 4B3.